Here is a 354-residue protein sequence, read N- to C-terminus: Holliday junction branch migration complex subunit RuvB (354 aa).

Positions 4–191 (TDKLAAPARV…FGIVARLEFY (188 aa)) are large ATPase domain (RuvB-L). ATP is bound by residues Leu30, Arg31, Gly72, Lys75, Thr76, Thr77, 138–140 (EDY), Arg181, Tyr191, and Arg228. Thr76 lines the Mg(2+) pocket. The small ATPAse domain (RuvB-S) stretch occupies residues 192–262 (TAEELARIVT…MADAALAMLD (71 aa)). The segment at 265 to 354 (RVGFDLMDRK…GDAGELFGDA (90 aa)) is head domain (RuvB-H). Positions 301, 320, and 325 each coordinate DNA.

This sequence belongs to the RuvB family. As to quaternary structure, homohexamer. Forms an RuvA(8)-RuvB(12)-Holliday junction (HJ) complex. HJ DNA is sandwiched between 2 RuvA tetramers; dsDNA enters through RuvA and exits via RuvB. An RuvB hexamer assembles on each DNA strand where it exits the tetramer. Each RuvB hexamer is contacted by two RuvA subunits (via domain III) on 2 adjacent RuvB subunits; this complex drives branch migration. In the full resolvosome a probable DNA-RuvA(4)-RuvB(12)-RuvC(2) complex forms which resolves the HJ.

The protein localises to the cytoplasm. The enzyme catalyses ATP + H2O = ADP + phosphate + H(+). The RuvA-RuvB-RuvC complex processes Holliday junction (HJ) DNA during genetic recombination and DNA repair, while the RuvA-RuvB complex plays an important role in the rescue of blocked DNA replication forks via replication fork reversal (RFR). RuvA specifically binds to HJ cruciform DNA, conferring on it an open structure. The RuvB hexamer acts as an ATP-dependent pump, pulling dsDNA into and through the RuvAB complex. RuvB forms 2 homohexamers on either side of HJ DNA bound by 1 or 2 RuvA tetramers; 4 subunits per hexamer contact DNA at a time. Coordinated motions by a converter formed by DNA-disengaged RuvB subunits stimulates ATP hydrolysis and nucleotide exchange. Immobilization of the converter enables RuvB to convert the ATP-contained energy into a lever motion, pulling 2 nucleotides of DNA out of the RuvA tetramer per ATP hydrolyzed, thus driving DNA branch migration. The RuvB motors rotate together with the DNA substrate, which together with the progressing nucleotide cycle form the mechanistic basis for DNA recombination by continuous HJ branch migration. Branch migration allows RuvC to scan DNA until it finds its consensus sequence, where it cleaves and resolves cruciform DNA. The polypeptide is Holliday junction branch migration complex subunit RuvB (Cupriavidus taiwanensis (strain DSM 17343 / BCRC 17206 / CCUG 44338 / CIP 107171 / LMG 19424 / R1) (Ralstonia taiwanensis (strain LMG 19424))).